The following is a 247-amino-acid chain: Adenosylcobinamide-GDP ribazoletransferase (247 aa).

A run of 5 helical transmembrane segments spans residues 34 to 54, 59 to 79, 113 to 133, 138 to 158, and 194 to 214; these read IITF…VFMV, CGAP…TGGF, GGLA…ELAL, ILAS…LLMY, and VLLP…AIFI.

It belongs to the CobS family. Requires Mg(2+) as cofactor.

Its subcellular location is the cell inner membrane. The catalysed reaction is alpha-ribazole + adenosylcob(III)inamide-GDP = adenosylcob(III)alamin + GMP + H(+). The enzyme catalyses alpha-ribazole 5'-phosphate + adenosylcob(III)inamide-GDP = adenosylcob(III)alamin 5'-phosphate + GMP + H(+). Its pathway is cofactor biosynthesis; adenosylcobalamin biosynthesis; adenosylcobalamin from cob(II)yrinate a,c-diamide: step 7/7. Its function is as follows. Joins adenosylcobinamide-GDP and alpha-ribazole to generate adenosylcobalamin (Ado-cobalamin). Also synthesizes adenosylcobalamin 5'-phosphate from adenosylcobinamide-GDP and alpha-ribazole 5'-phosphate. The polypeptide is Adenosylcobinamide-GDP ribazoletransferase (Escherichia coli O81 (strain ED1a)).